The sequence spans 216 residues: Protein Syd (216 aa).

It belongs to the Syd family.

Its subcellular location is the cell inner membrane. In terms of biological role, interacts with the SecY protein in vivo. May bind preferentially to an uncomplexed state of SecY, thus functioning either as a chelating agent for excess SecY in the cell or as a regulatory factor that negatively controls the translocase function. This chain is Protein Syd, found in Shewanella sp. (strain MR-7).